We begin with the raw amino-acid sequence, 255 residues long: Type III pantothenate kinase (255 aa).

6 to 13 contacts ATP; the sequence is DIGNTNIK. 107 to 110 is a substrate binding site; it reads GADR. The active-site Proton acceptor is the aspartate 109. Threonine 132 provides a ligand contact to ATP. Position 184 (threonine 184) interacts with substrate.

It belongs to the type III pantothenate kinase family. In terms of assembly, homodimer. NH4(+) serves as cofactor. Requires K(+) as cofactor.

It localises to the cytoplasm. The catalysed reaction is (R)-pantothenate + ATP = (R)-4'-phosphopantothenate + ADP + H(+). It participates in cofactor biosynthesis; coenzyme A biosynthesis; CoA from (R)-pantothenate: step 1/5. Its function is as follows. Catalyzes the phosphorylation of pantothenate (Pan), the first step in CoA biosynthesis. The sequence is that of Type III pantothenate kinase from Roseiflexus sp. (strain RS-1).